The sequence spans 385 residues: 8-amino-7-oxononanoate synthase (385 aa).

Arg21 is a substrate binding site. 108 to 109 (GY) contacts pyridoxal 5'-phosphate. His133 contributes to the substrate binding site. Residues Ser179, His207, and Thr233 each contribute to the pyridoxal 5'-phosphate site. Position 236 is an N6-(pyridoxal phosphate)lysine (Lys236). Substrate is bound at residue Thr350.

Belongs to the class-II pyridoxal-phosphate-dependent aminotransferase family. BioF subfamily. In terms of assembly, homodimer. The cofactor is pyridoxal 5'-phosphate.

It carries out the reaction 6-carboxyhexanoyl-[ACP] + L-alanine + H(+) = (8S)-8-amino-7-oxononanoate + holo-[ACP] + CO2. The protein operates within cofactor biosynthesis; biotin biosynthesis. Functionally, catalyzes the decarboxylative condensation of pimeloyl-[acyl-carrier protein] and L-alanine to produce 8-amino-7-oxononanoate (AON), [acyl-carrier protein], and carbon dioxide. This is 8-amino-7-oxononanoate synthase from Pectobacterium atrosepticum (strain SCRI 1043 / ATCC BAA-672) (Erwinia carotovora subsp. atroseptica).